Consider the following 1513-residue polypeptide: DNA-directed RNA polymerase subunit beta'' (1513 aa).

Zn(2+) is bound by residues C220, C296, C303, and C306. The interval 644 to 769 is disordered; it reads RTREKDSENE…EYGNPEEDSV (126 aa). Residues 659–679 show a composition bias toward basic and acidic residues; it reads NEYRTREEECKTLEDEYRTRE. The span at 680 to 707 shows a compositional bias: acidic residues; that stretch reads EEYETLEDEYGIPENEYETLEDEYGILE. Residues 726–737 show a composition bias toward basic and acidic residues; that stretch reads NKYRPREDKYGT. The span at 738–767 shows a compositional bias: acidic residues; sequence LEEDSEDEHGTLEEDSEEDSEDEYGNPEED.

It belongs to the RNA polymerase beta' chain family. RpoC2 subfamily. In terms of assembly, in plastids the minimal PEP RNA polymerase catalytic core is composed of four subunits: alpha, beta, beta', and beta''. When a (nuclear-encoded) sigma factor is associated with the core the holoenzyme is formed, which can initiate transcription. Zn(2+) serves as cofactor.

It is found in the plastid. The protein localises to the chloroplast. It carries out the reaction RNA(n) + a ribonucleoside 5'-triphosphate = RNA(n+1) + diphosphate. Its function is as follows. DNA-dependent RNA polymerase catalyzes the transcription of DNA into RNA using the four ribonucleoside triphosphates as substrates. The protein is DNA-directed RNA polymerase subunit beta'' of Oryza nivara (Indian wild rice).